Consider the following 315-residue polypeptide: tRNA dimethylallyltransferase (315 aa).

Residue 14–21 (GATATGKS) participates in ATP binding. Residue 16-21 (TATGKS) participates in substrate binding. Positions 39 to 42 (DSRQ) are interaction with substrate tRNA.

This sequence belongs to the IPP transferase family. In terms of assembly, monomer. Requires Mg(2+) as cofactor.

The catalysed reaction is adenosine(37) in tRNA + dimethylallyl diphosphate = N(6)-dimethylallyladenosine(37) in tRNA + diphosphate. Catalyzes the transfer of a dimethylallyl group onto the adenine at position 37 in tRNAs that read codons beginning with uridine, leading to the formation of N6-(dimethylallyl)adenosine (i(6)A). The polypeptide is tRNA dimethylallyltransferase (Microcystis aeruginosa (strain NIES-843 / IAM M-2473)).